Here is an 860-residue protein sequence, read N- to C-terminus: Leucine--tRNA ligase (860 aa).

Positions 42-52 (PYPSGRLHMGH) match the 'HIGH' region motif. A 'KMSKS' region motif is present at residues 619–623 (KMSKS). An ATP-binding site is contributed by Lys622.

Belongs to the class-I aminoacyl-tRNA synthetase family.

Its subcellular location is the cytoplasm. The catalysed reaction is tRNA(Leu) + L-leucine + ATP = L-leucyl-tRNA(Leu) + AMP + diphosphate. The protein is Leucine--tRNA ligase of Sodalis glossinidius (strain morsitans).